The following is a 360-amino-acid chain: Mannose-1-phosphate guanylyltransferase catalytic subunit beta (360 aa).

The tract at residues 2-222 (KALILVGGYG…QGFWMDIGQP (221 aa)) is substrate-binding domain. Aspartate 110 provides a ligand contact to GDP-alpha-D-mannose. A Mg(2+)-binding site is contributed by aspartate 110. The active site involves lysine 162. A GDP-alpha-D-mannose-binding site is contributed by aspartate 218. A Mg(2+)-binding site is contributed by aspartate 218. The hexapeptide repeat domain stretch occupies residues 245-360 (CSGPGIVGNV…ESVPEPRIIM (116 aa)).

This sequence belongs to the transferase hexapeptide repeat family. As to quaternary structure, component of the GMPPA-GMPPB mannose-1-phosphate guanylyltransferase complex composed of 4 GMPPA subunits and 8 GMPPB subunits; the complex is organized into three layers, a central layer made up of 2 GMPPA dimers sandwiched between two layers each made up of 2 GMPPB dimers. GMPPB catalytic activity is reduced when part of the complex and binding of GDP-alpha-D-Mannose by GMPPA induces allosteric feedback inhibition of GMPPB. Mg(2+) serves as cofactor. As to expression, ubiquitously expressed, including in brain and skeletal muscle. Weakly expressed with highest expression in skeletal muscle, brain and gonads.

The protein resides in the cytoplasm. The enzyme catalyses alpha-D-mannose 1-phosphate + GTP + H(+) = GDP-alpha-D-mannose + diphosphate. It participates in nucleotide-sugar biosynthesis; GDP-alpha-D-mannose biosynthesis; GDP-alpha-D-mannose from alpha-D-mannose 1-phosphate (GTP route): step 1/1. Its activity is regulated as follows. Enzyme activity is reduced by incorporation into the GMPPA-GMPPB mannose-1-phosphate guanylyltransferase complex. Allosterically inhibited, when part of the GMPPA-GMPPB complex, by GDP-alpha-D-mannose binding to GMPPA. In terms of biological role, catalytic subunit of the GMPPA-GMPPB mannose-1-phosphate guanylyltransferase complex. Catalyzes the formation of GDP-mannose, an essential precursor of glycan moieties of glycoproteins and glycolipids. Can catalyze the reverse reaction in vitro. Together with GMPPA regulates GDP-alpha-D-mannose levels. The chain is Mannose-1-phosphate guanylyltransferase catalytic subunit beta from Homo sapiens (Human).